The sequence spans 397 residues: Ribosomal RNA large subunit methyltransferase I (397 aa).

A PUA domain is found at 2 to 79; the sequence is TAAIYLVKGR…KEEINKAFFV (78 aa).

This sequence belongs to the methyltransferase superfamily. RlmI family.

The protein localises to the cytoplasm. The enzyme catalyses cytidine(1962) in 23S rRNA + S-adenosyl-L-methionine = 5-methylcytidine(1962) in 23S rRNA + S-adenosyl-L-homocysteine + H(+). In terms of biological role, specifically methylates the cytosine at position 1962 (m5C1962) of 23S rRNA. The sequence is that of Ribosomal RNA large subunit methyltransferase I from Vibrio campbellii (strain ATCC BAA-1116).